The sequence spans 563 residues: PTS system fructose-specific EIIB'BC component (563 aa).

PTS EIIB type-2 domains are found at residues 1–85 (MKTL…KGHA) and 104–201 (KRVV…KAVA). Cys112 (phosphocysteine intermediate; for EIIB activity) is an active-site residue. Cys112 carries the phosphocysteine; by EIIA modification. The PTS EIIC type-2 domain occupies 226-561 (AYRHLLTGVS…KRPEVDAVAK (336 aa)). 9 helical membrane-spanning segments follow: residues 236–256 (YMLPMVVAGGLCIALSFAFGI), 274–294 (GGSAFALMVPVLAGYIAFSIA), 304–324 (IGGMLAVSTGSGFIGGIIAGF), 349–369 (ILIIPLISSLVVGLAMIYLIG), 382–402 (WLQTMGTANAVLLGAILGGMM), 430–450 (MAAIMAAGMVPPLAMGLATMV), 463–483 (GKAALVLGLCFISEGAIPFAA), 489–509 (VLPCCIVGGALTGAISMAIGA), and 518–538 (LFVLLIPGAITPVLGYLVAII).

It is found in the cell inner membrane. It catalyses the reaction D-fructose(out) + N(pros)-phospho-L-histidyl-[protein] = D-fructose 1-phosphate(in) + L-histidyl-[protein]. Its function is as follows. The phosphoenolpyruvate-dependent sugar phosphotransferase system (sugar PTS), a major carbohydrate active transport system, catalyzes the phosphorylation of incoming sugar substrates concomitantly with their translocation across the cell membrane. The enzyme II FruAB PTS system is involved in fructose transport. The sequence is that of PTS system fructose-specific EIIB'BC component from Escherichia coli (strain K12).